Reading from the N-terminus, the 222-residue chain is Sugar fermentation stimulation protein homolog (222 aa).

This sequence belongs to the SfsA family.

This Thermotoga petrophila (strain ATCC BAA-488 / DSM 13995 / JCM 10881 / RKU-1) protein is Sugar fermentation stimulation protein homolog.